We begin with the raw amino-acid sequence, 30 residues long: Fimbrial assembly protein, serogroup B1 (30 aa).

This Dichelobacter nodosus (Bacteroides nodosus) protein is Fimbrial assembly protein, serogroup B1 (fimB).